A 971-amino-acid chain; its full sequence is 116 kDa U5 small nuclear ribonucleoprotein component (971 aa).

Met1 bears the N-acetylmethionine mark. Residues 1–52 (MDTDLYDEFGNYIGPELDSDEDDDELGRETKDLDEDEDEDEDDVGEHEDDHP) are disordered. Over residues 17–47 (LDSDEDDDELGRETKDLDEDEDEDEDDVGEH) the composition is skewed to acidic residues. Ser19 bears the Phosphoserine mark. A Glycyl lysine isopeptide (Lys-Gly) (interchain with G-Cter in SUMO1); alternate cross-link involves residue Lys63. Lys63 is covalently cross-linked (Glycyl lysine isopeptide (Lys-Gly) (interchain with G-Cter in SUMO2); alternate). Position 85 is a phosphothreonine (Thr85). The 283-residue stretch at 126–408 (ELIRNVTLCG…GIHLTKEELK (283 aa)) folds into the tr-type G domain. GTP is bound by residues 135-142 (GHLHHGKT), 203-207 (DTPGH), and 257-260 (NKID).

Belongs to the TRAFAC class translation factor GTPase superfamily. Classic translation factor GTPase family. EF-G/EF-2 subfamily. As to quaternary structure, component of the U5 snRNP and the U4/U6-U5 tri-snRNP complex, a building block of the spliceosome. The U4/U6-U5 tri-snRNP complex is composed of the U4, U6 and U5 snRNAs and at least PRPF3, PRPF4, PRPF6, PRPF8, PRPF31, SNRNP200, TXNL4A, SNRNP40, DDX23, CD2BP2, PPIH, SNU13, EFTUD2, SART1 and USP39. Component of the pre-catalytic, catalytic and post-catalytic spliceosome complexes. Component of the minor spliceosome, which splices U12-type introns. Within this complex, interacts with CRIPT. Interacts with ERBB4 and PRPF8. Interacts with PIH1D1. Interacts with RPAP3 and URI1 in a ZNHIT2-dependent manner. Interacts with NRDE2. Interacts with FAM50A. Interacts with UBL5.

It is found in the nucleus. Its function is as follows. Required for pre-mRNA splicing as component of the spliceosome, including pre-catalytic, catalytic and post-catalytic spliceosomal complexes. Component of the U5 snRNP and the U4/U6-U5 tri-snRNP complex, a building block of the spliceosome. As a component of the minor spliceosome, involved in the splicing of U12-type introns in pre-mRNAs. This chain is 116 kDa U5 small nuclear ribonucleoprotein component (Eftud2), found in Mus musculus (Mouse).